A 202-amino-acid polypeptide reads, in one-letter code: LexA repressor (202 aa).

Residues 28–48 constitute a DNA-binding region (H-T-H motif); the sequence is RAEIAQRLGFRSPNAAEEHLK. Catalysis depends on for autocatalytic cleavage activity residues S119 and K156.

Belongs to the peptidase S24 family. As to quaternary structure, homodimer.

It catalyses the reaction Hydrolysis of Ala-|-Gly bond in repressor LexA.. Functionally, represses a number of genes involved in the response to DNA damage (SOS response), including recA and lexA. Binds to the 16 bp palindromic sequence 5'-CTGTATATATATACAG-3'. In the presence of single-stranded DNA, RecA interacts with LexA causing an autocatalytic cleavage which disrupts the DNA-binding part of LexA, leading to derepression of the SOS regulon and eventually DNA repair. In Cronobacter sakazakii (strain ATCC BAA-894) (Enterobacter sakazakii), this protein is LexA repressor.